The following is a 141-amino-acid chain: HTH-type transcriptional repressor NsrR (141 aa).

One can recognise an HTH rrf2-type domain in the interval 2 to 129; that stretch reads QLTNFTDFGL…DQHTIQDMLT (128 aa). The segment at residues 28 to 51 is a DNA-binding region (H-T-H motif); it reads ITVVTETFDVSRNHMVKIINKLGQ. Positions 91, 96, and 102 each coordinate [2Fe-2S] cluster.

The cofactor is [2Fe-2S] cluster.

Its function is as follows. Nitric oxide-sensitive repressor of genes involved in protecting the cell against nitrosative stress. May require iron for activity. The sequence is that of HTH-type transcriptional repressor NsrR from Aliivibrio salmonicida (strain LFI1238) (Vibrio salmonicida (strain LFI1238)).